The chain runs to 361 residues: Methylthioribose-1-phosphate isomerase (361 aa).

Residue D245 is the Proton donor of the active site.

The protein belongs to the eIF-2B alpha/beta/delta subunits family. MtnA subfamily.

It localises to the cytoplasm. Its subcellular location is the nucleus. The catalysed reaction is 5-(methylsulfanyl)-alpha-D-ribose 1-phosphate = 5-(methylsulfanyl)-D-ribulose 1-phosphate. The protein operates within amino-acid biosynthesis; L-methionine biosynthesis via salvage pathway; L-methionine from S-methyl-5-thio-alpha-D-ribose 1-phosphate: step 1/6. In terms of biological role, catalyzes the interconversion of methylthioribose-1-phosphate (MTR-1-P) into methylthioribulose-1-phosphate (MTRu-1-P). This is Methylthioribose-1-phosphate isomerase from Monosiga brevicollis (Choanoflagellate).